Reading from the N-terminus, the 309-residue chain is Probable manganese-dependent inorganic pyrophosphatase (309 aa).

Residues H9, D13, D15, D75, H97, and D149 each coordinate Mn(2+).

It belongs to the PPase class C family. The cofactor is Mn(2+).

It is found in the cytoplasm. It carries out the reaction diphosphate + H2O = 2 phosphate + H(+). This Staphylococcus haemolyticus (strain JCSC1435) protein is Probable manganese-dependent inorganic pyrophosphatase.